A 154-amino-acid chain; its full sequence is Myoglobin (154 aa).

One can recognise a Globin domain in the interval 2-148; it reads GLSDGEWQLV…FRNEMAAQYK (147 aa). A Phosphoserine modification is found at S4. A nitrite-binding site is contributed by H65. Position 65 (H65) interacts with O2. At T68 the chain carries Phosphothreonine. H94 contributes to the heme b binding site.

As to quaternary structure, monomeric.

It is found in the cytoplasm. The protein localises to the sarcoplasm. It carries out the reaction Fe(III)-heme b-[protein] + nitric oxide + H2O = Fe(II)-heme b-[protein] + nitrite + 2 H(+). It catalyses the reaction H2O2 + AH2 = A + 2 H2O. In terms of biological role, monomeric heme protein which primary function is to store oxygen and facilitate its diffusion within muscle tissues. Reversibly binds oxygen through a pentacoordinated heme iron and enables its timely and efficient release as needed during periods of heightened demand. Depending on the oxidative conditions of tissues and cells, and in addition to its ability to bind oxygen, it also has a nitrite reductase activity whereby it regulates the production of bioactive nitric oxide. Under stress conditions, like hypoxia and anoxia, it also protects cells against reactive oxygen species thanks to its pseudoperoxidase activity. The protein is Myoglobin of Bubalus bubalis (Domestic water buffalo).